Here is a 242-residue protein sequence, read N- to C-terminus: tRNA pseudouridine synthase A (242 aa).

The active-site Nucleophile is the Asp-51. Tyr-107 lines the substrate pocket.

It belongs to the tRNA pseudouridine synthase TruA family. In terms of assembly, homodimer.

The catalysed reaction is uridine(38/39/40) in tRNA = pseudouridine(38/39/40) in tRNA. In terms of biological role, formation of pseudouridine at positions 38, 39 and 40 in the anticodon stem and loop of transfer RNAs. This chain is tRNA pseudouridine synthase A, found in Helicobacter pylori (strain ATCC 700392 / 26695) (Campylobacter pylori).